Here is a 538-residue protein sequence, read N- to C-terminus: D-alanyl-D-alanine carboxypeptidase (538 aa).

The interval 1–21 (MKQSSPEPLRPRRTGGRGGAR) is disordered. The first 49 residues, 1–49 (MKQSSPEPLRPRRTGGRGGARRAAALVTIPLLPMTLLGASPALADASGA), serve as a signal peptide directing secretion. S98 serves as the catalytic Acyl-ester intermediate. K101 acts as the Proton acceptor in catalysis. The absent in class-A beta-lactamases stretch occupies residues 146–319 (TLSAEDLDAM…KGDVGLGGVP (174 aa)). The active site involves S347. K459 lines the substrate pocket. The propeptide at 516 to 538 (GARMMRGPVQGSGELECSWVQAC) is removed in mature form.

The protein belongs to the peptidase S13 family.

The protein localises to the secreted. It carries out the reaction Preferential cleavage: (Ac)2-L-Lys-D-Ala-|-D-Ala. Also transpeptidation of peptidyl-alanyl moieties that are N-acyl substituents of D-alanine.. It functions in the pathway cell wall biogenesis; peptidoglycan biosynthesis. Inhibited by benzylpenicillin, cephaloridine, ampicillin and cetiofur. Its function is as follows. Removes C-terminal D-alanyl residues from sugar-peptide cell wall precursors. The sequence is that of D-alanyl-D-alanine carboxypeptidase (dac) from Actinomadura sp. (strain R39).